The following is a 234-amino-acid chain: Large ribosomal subunit protein uL1 (234 aa).

The protein belongs to the universal ribosomal protein uL1 family. As to quaternary structure, part of the 50S ribosomal subunit.

Its function is as follows. Binds directly to 23S rRNA. The L1 stalk is quite mobile in the ribosome, and is involved in E site tRNA release. Functionally, protein L1 is also a translational repressor protein, it controls the translation of the L11 operon by binding to its mRNA. The chain is Large ribosomal subunit protein uL1 from Helicobacter hepaticus (strain ATCC 51449 / 3B1).